The primary structure comprises 550 residues: Hydroxylamine reductase (550 aa).

[2Fe-2S] cluster contacts are provided by C3, C6, C18, and C25. Residues H249, E273, C317, C405, C433, C458, E492, and K494 each contribute to the hybrid [4Fe-2O-2S] cluster site. C405 is subject to Cysteine persulfide.

It belongs to the HCP family. [2Fe-2S] cluster is required as a cofactor. Requires hybrid [4Fe-2O-2S] cluster as cofactor.

The protein resides in the cytoplasm. It carries out the reaction A + NH4(+) + H2O = hydroxylamine + AH2 + H(+). Functionally, catalyzes the reduction of hydroxylamine to form NH(3) and H(2)O. In Salmonella dublin (strain CT_02021853), this protein is Hydroxylamine reductase.